The sequence spans 122 residues: Ferredoxin (122 aa).

Positions 1–33 (MSHDRRLTVGSLLPNQPRPVAVPKAPSVVQPSK) are disordered. A targeting peptide region spans residues 8–14 (TVGSLLP). One can recognise a 2Fe-2S ferredoxin-type domain in the interval 40–122 (AIIRLEQNGR…FRLACQANME (83 aa)). 4 residues coordinate [2Fe-2S] cluster: Cys-75, Cys-80, Cys-83, and Cys-117.

Belongs to the 2Fe2S plant-type ferredoxin family. [2Fe-2S] cluster serves as cofactor.

It is found in the encapsulin nanocompartment. Its function is as follows. Cargo protein of a type 1 encapsulin nanocompartment. An iron-binding protein probably involved in iron mineralization in the encapsulin nanocompartment. 2 different cargo proteins have been identified (IMEF and Fer); when both are expressed in E.coli with the shell protein only IMEF is detected within the nanocompartment. E.coli expressing all 3 genes stores the largest amount of iron and is protected from Fe/H2O2-induced oxidative stress. This Bacillus thermotolerans (Quasibacillus thermotolerans) protein is Ferredoxin.